The chain runs to 302 residues: tRNA pseudouridine synthase B (302 aa).

Asp38 acts as the Nucleophile in catalysis.

This sequence belongs to the pseudouridine synthase TruB family. Type 1 subfamily.

It catalyses the reaction uridine(55) in tRNA = pseudouridine(55) in tRNA. Responsible for synthesis of pseudouridine from uracil-55 in the psi GC loop of transfer RNAs. This chain is tRNA pseudouridine synthase B, found in Ligilactobacillus salivarius (strain UCC118) (Lactobacillus salivarius).